Here is a 678-residue protein sequence, read N- to C-terminus: MENHLPNIFYFPNCVTAFPYRYTQKELDDMKPVDRERFKYAVFPLIKHRWCRAYVVRDNHTFKLNVETSKRLRRVAYPTLVPLVGVNAALREYVMEDGTKISFECYSYLICKRTTSLHDVDDSTIRGLVEGGNQLNIFTNSVGSVTNTVGIFGNPNPFAKVPLKSLHPSMQCKIFTSWARRVPVVLTGDTGVGKTSQVPKLLLWFNYLFGGFTDLSTLTFEVQEKPIVLSLPRVALVKLHSETLLTSLGFEEIHGSPVSLKFGNMQERFVNTRFSRYGIVFSTHKITLNTLFKYSTVILDEVHEHDQTGDIIIAVCRKYIRKLDSLFLMTATLEDDRRRIEEFFAESVFVHIPGGTLFSISEAYVKNSNDPLNRFMYIEEEKRNLANAIKTYTPPKQSSGIVFVSTVSQCEAYKQYLSERLPYKFYIIHGKVQNINDVLSDIYDNDGVSIIISTPYLESSVTVRNATHVYDTGRVYIPSPYGGCESFISKSMRDQRKGRVGRVNPGMYVYFYNVSELRPIKRIDFEFLHNYVLYAKVFDLQLPEDLFVKPTNVTRLHDVIEYIRSFDISDDVWTRLLSSYYIHILEYAKVYARGGSGALALDSFERTGNLTDDALDAIKSLNMRAKILSHKKASAHTYALRCKLLFGVYAGKVFTVYHKRPLTGYITMIAEHSFIPDY.

Residues 175–351 (FTSWARRVPV…EFFAESVFVH (177 aa)) form the Helicase ATP-binding domain. ATP is bound at residue 188–195 (GDTGVGKT). Positions 300 to 303 (DEVH) match the DEXH box motif. Residues 371–546 (PLNRFMYIEE…VFDLQLPEDL (176 aa)) form the Helicase C-terminal domain.

It belongs to the DEAD box helicase family. DEAH subfamily. Monomer.

The protein localises to the virion. It catalyses the reaction ATP + H2O = ADP + phosphate + H(+). Functionally, NTP-dependent helicase that catalyzes unidirectional unwinding of 3'tailed duplex RNAs and plays an important role during transcription of early mRNAs, presumably by preventing R-loop formation behind the elongating RNA polymerase. Might also play a role in the export of newly synthesized mRNA chains out of the core into the cytoplasm. Required for replication and propagation of viral particles. This is RNA helicase NPH-II (OPG084) from Oryctolagus cuniculus (Rabbit).